The primary structure comprises 854 residues: Envelope glycoprotein gp150 (854 aa).

Residues 1-783 (MAEGFAANRQ…WIGKIPQYLK (783 aa)) are Extracellular-facing. N-linked (GlcNAc...) asparagine; by host glycosylation is found at N220, N258, N269, N274, N298, N330, N336, N342, N418, N422, N448, N469, N481, N499, N518, N531, N548, and N551. The segment at 614 to 634 (IMLALATVLSIAGAGTGATAI) is fusion peptide. Residues 641-691 (QQVLATHQEALDKITEALKINNLRLVTLEHQMLVIGLKVEAIEKFLYTAFA) adopt a coiled-coil conformation. An immunosuppression region spans residues 660–678 (INNLRLVTLEHQMLVIGLK). N715, N719, N727, and N735 each carry an N-linked (GlcNAc...) asparagine; by host glycan. Residues 734-770 (YNQTKYLQQKFYEIIMDIEQNNVQGKQGLQKLQNWQD) are a coiled coil. A helical transmembrane segment spans residues 784–804 (GLLGGILGIGLGILLLILCLP). Topologically, residues 805–854 (TLVDCIRNCISKVLGYTVIAMPEIDDEEETVQMELRKNGRQCGMSEKEEE) are cytoplasmic.

In terms of assembly, the mature envelope protein (Env) consists of a trimer of SU-TM heterodimers attached by non-covalent interactions or by a labile interchain disulfide bond. Post-translationally, specific enzymatic cleavages in vivo yield mature proteins. Envelope glycoproteins are synthesized as an inactive precursor that is N-glycosylated and processed likely by host cell furin or by a furin-like protease in the Golgi to yield the mature SU and TM proteins. The cleavage site between SU and TM requires the minimal sequence [KR]-X-[KR]-R.

It localises to the virion membrane. Its subcellular location is the host cell membrane. In terms of biological role, the surface protein (SU) attaches the virus to the host cell by binding to its receptor. This interaction triggers the refolding of the transmembrane protein (TM) and is thought to activate its fusogenic potential by unmasking its fusion peptide. Fusion occurs at the host cell plasma membrane. Functionally, the transmembrane protein (TM) acts as a class I viral fusion protein. Under the current model, the protein has at least 3 conformational states: pre-fusion native state, pre-hairpin intermediate state, and post-fusion hairpin state. During viral and target cell membrane fusion, the coiled coil regions (heptad repeats) assume a trimer-of-hairpins structure, positioning the fusion peptide in close proximity to the C-terminal region of the ectodomain. The formation of this structure appears to drive apposition and subsequent fusion of viral and target cell membranes. Membranes fusion leads to delivery of the nucleocapsid into the cytoplasm. The polypeptide is Envelope glycoprotein gp150 (env) (Feline immunodeficiency virus (strain San Diego) (FIV)).